A 418-amino-acid polypeptide reads, in one-letter code: MAQTLVEKIFSKASGKEVKAGEFVMANIDLAMIHDITAPLAIKAFREILGSDAKVWDKSKVIMAFDHQVPADSVHAAENHKMLRKFAEEQGILNYDVKGGIAHQIMVENHVEPGMLIVGADSHTCMYGALGAFATGIGSTDMGFVLAMGKLWFKVPESIRFNVHGKLEKHVYGKDIVLKLIGMVGADGANYKACIYSGEVVEKLGMSDRLTMCNMAIEMGGKAGIVEPDKTTLEYLKAMGRPYEGELLKSDEDAEFQEVELDVTGMEPQVAAPHRVDNVVGISEVEGTRVDQVFIGSCTNGRYEDLKIAAEILKGEKVASNVRLIVIPASHREYRRALKEGLIEIFVDAGALVEAPCCGPCMGGSFGLIASGEVSVSTSNRNFIGRQGSPEGKIYLVNPAVAAATAIYGEITDPRKIK.

Residues cysteine 298, cysteine 358, and cysteine 361 each coordinate [4Fe-4S] cluster.

The protein belongs to the aconitase/IPM isomerase family. LeuC type 2 subfamily. Heterodimer of LeuC and LeuD. [4Fe-4S] cluster is required as a cofactor.

The enzyme catalyses (2R,3S)-3-isopropylmalate = (2S)-2-isopropylmalate. It functions in the pathway amino-acid biosynthesis; L-leucine biosynthesis; L-leucine from 3-methyl-2-oxobutanoate: step 2/4. Catalyzes the isomerization between 2-isopropylmalate and 3-isopropylmalate, via the formation of 2-isopropylmaleate. This is 3-isopropylmalate dehydratase large subunit 1 from Archaeoglobus fulgidus (strain ATCC 49558 / DSM 4304 / JCM 9628 / NBRC 100126 / VC-16).